The sequence spans 164 residues: Thiol peroxidase (164 aa).

The region spanning 18 to 163 is the Thioredoxin domain; sequence VNEGDIAPNF…FEAALKAYRN (146 aa). C60 functions as the Cysteine sulfenic acid (-SOH) intermediate in the catalytic mechanism. Cysteines 60 and 93 form a disulfide.

This sequence belongs to the peroxiredoxin family. Tpx subfamily. Homodimer.

The enzyme catalyses a hydroperoxide + [thioredoxin]-dithiol = an alcohol + [thioredoxin]-disulfide + H2O. Functionally, thiol-specific peroxidase that catalyzes the reduction of hydrogen peroxide and organic hydroperoxides to water and alcohols, respectively. Plays a role in cell protection against oxidative stress by detoxifying peroxides. The chain is Thiol peroxidase from Staphylococcus epidermidis (strain ATCC 35984 / DSM 28319 / BCRC 17069 / CCUG 31568 / BM 3577 / RP62A).